The following is a 193-amino-acid chain: Bradykinin-potentiating and C-type natriuretic peptides (193 aa).

Positions 1–23 (MFVSRLAASGLLLLALLALSLDG) are cleaved as a signal peptide. The propeptide occupies 24-27 (KPVH). Residues 25 to 173 (PVHQSKPGRS…RMKGLAKKAM (149 aa)) form a disordered region. Glutamine 28 is subject to Pyrrolidone carboxylic acid. 2 propeptides span residues 40 to 43 (LSAQ) and 58 to 64 (LSVQQWS). Position 65 is a pyrrolidone carboxylic acid (glutamine 65). A propeptide spanning residues 75–169 (VVVQPHESPA…GGARRMKGLA (95 aa)) is cleaved from the precursor. Low complexity predominate over residues 95–123 (SPGPEAASGPAAPHRLPKSKGASATSAAS). Residues 125–150 (PMRDLRTDGKQERQKWGRMVQPDHHA) show a composition bias toward basic and acidic residues. The span at 152–162 (PGGGGGGGGGA) shows a compositional bias: gly residues. The span at 163-173 (RRMKGLAKKAM) shows a compositional bias: basic residues. Cysteine 177 and cysteine 193 form a disulfide bridge.

In the N-terminal section; belongs to the bradykinin-potentiating peptide family. This sequence in the C-terminal section; belongs to the natriuretic peptide family. In terms of tissue distribution, expressed by the venom gland.

It localises to the secreted. Its function is as follows. Bradykinin-potentiating peptide both inhibits the activity of the angiotensin-converting enzyme (ACE) and enhances the action of bradykinin by inhibiting the peptidases that inactivate it. It acts as an indirect hypotensive agent. Neither synthetic Tf1, nor synthetic Tf2 show bradykinin-potentiating effects. Functionally, has a vasorelaxant activity in rat aortic strips and a diuretic potency in anesthetized rats. Has a vasorelaxant activity in rat aortic strips and a diuretic potency in anesthetized rats. Is as potent as Tf-CNP. The chain is Bradykinin-potentiating and C-type natriuretic peptides from Protobothrops flavoviridis (Habu).